Reading from the N-terminus, the 265-residue chain is MNYFRILYCSVLLFFSFFSCTSAAVSNHPIHWGFQKNNNHQPPDAGKEWNELLNKYGAFYLGDPSKKEIYLTFDNGYENGYTSKILDVLKKHDVHATFFVTGHYLKTAPDLVKRMVKEGHIVGNHSWSHPDMTTISADKIKKELDAVSDKVKELTGQEGTVYVRPPRGIFSERTLALSEKYGYRNIFWSLAFVDWKVNEQKGWRYAYDNIINQIHPGAIILLHTVSKDNADALDEAIKTLKQQGYTFKSLDDLVMEKMFESPFLY.

Positions 1 to 23 are cleaved as a signal peptide; that stretch reads MNYFRILYCSVLLFFSFFSCTSA. In terms of domain architecture, NodB homology spans 67 to 248; it reads KEIYLTFDNG…TLKQQGYTFK (182 aa).

Belongs to the polysaccharide deacetylase family.

This is an uncharacterized protein from Geobacillus stearothermophilus (Bacillus stearothermophilus).